The chain runs to 278 residues: Large ribosomal subunit protein uL2c (278 aa).

The tract at residues Asn-224–Lys-256 is disordered.

It belongs to the universal ribosomal protein uL2 family. Part of the 50S ribosomal subunit.

The protein resides in the plastid. The chain is Large ribosomal subunit protein uL2c (rpl2) from Cuscuta exaltata (Tall dodder).